A 348-amino-acid chain; its full sequence is Ileal sodium/bile acid cotransporter (348 aa).

Residues 1 to 28 (MNDPNSCVDNATVCSGASCVVPESNFNN) are Extracellular-facing. N-linked (GlcNAc...) asparagine glycosylation is present at N10. The helical transmembrane segment at 29 to 49 (ILSVVLSTVLTILLALVMFSM) threads the bilayer. Topologically, residues 50 to 82 (GCNVEIKKFLGHIKRPWGICVGFLCQFGIMPLT) are cytoplasmic. The helical transmembrane segment at 83 to 103 (GFILSVAFDILPLQAVVVLII) threads the bilayer. The Extracellular segment spans residues 104–126 (GCCPGGTASNILAYWVDGDMDLS). A helical membrane pass occupies residues 127–147 (VSMTTCSTLLALGMMPLCLLI). The Cytoplasmic segment spans residues 148-157 (YTKMWVDSGS). A helical transmembrane segment spans residues 158-178 (IVIPYDNIGTSLVSLVVPVSI). Residues 179–195 (GMFVNHKWPQKAKIILK) are Extracellular-facing. The chain crosses the membrane as a helical span at residues 196–216 (IGSIAGAILIVLIAVVGGILY). Over 217 to 224 (QSAWIIAP) the chain is Cytoplasmic. The helical transmembrane segment at 225–245 (KLWIIGTIFPVAGYSLGFLLA) threads the bilayer. Topologically, residues 246-284 (RIAGLPWYRCRTVAFETGMQNTQLCSTIVQLSFTPEELN) are extracellular. A helical transmembrane segment spans residues 285–305 (VVFTFPLIYSIFQLAFAAIFL). Residues 306–348 (GFYVAYKKCHGKNKAEIPESKENGTEPESSFYKANGGFQPDEK) lie on the Cytoplasmic side of the membrane. Residues 320–329 (AEIPESKENG) are compositionally biased toward basic and acidic residues. Positions 320-348 (AEIPESKENGTEPESSFYKANGGFQPDEK) are disordered. A Phosphoserine modification is found at S335.

The protein belongs to the bile acid:sodium symporter (BASS) (TC 2.A.28) family. In terms of assembly, monomer and homodimer. Mainly expressed in ileum and kidney, lower expression in cecum.

It is found in the membrane. The catalysed reaction is taurocholate(out) + 2 Na(+)(out) = taurocholate(in) + 2 Na(+)(in). It catalyses the reaction cholate(out) + 2 Na(+)(out) = cholate(in) + 2 Na(+)(in). It carries out the reaction taurochenodeoxycholate(out) + 2 Na(+)(out) = taurochenodeoxycholate(in) + 2 Na(+)(in). The enzyme catalyses tauroursodeoxycholate(out) + 2 Na(+)(out) = tauroursodeoxycholate(in) + 2 Na(+)(in). The catalysed reaction is glycocholate(out) + 2 Na(+)(out) = glycocholate(in) + 2 Na(+)(in). It catalyses the reaction tauronorcholate(out) + 2 Na(+)(out) = tauronorcholate(in) + 2 Na(+)(in). It carries out the reaction tauroallocholate(out) + 2 Na(+)(out) = tauroallocholate(in) + 2 Na(+)(in). The enzyme catalyses taurodeoxycholate(out) + 2 Na(+)(out) = taurodeoxycholate(in) + 2 Na(+)(in). The catalysed reaction is tauro-beta-muricholate(out) + 2 Na(+)(out) = tauro-beta-muricholate(in) + 2 Na(+)(in). Its function is as follows. Plays a critical role in the sodium-dependent reabsorption of bile acids from the lumen of the small intestine. Transports various bile acids, unconjugated or conjugated, such as cholate and taurocholate. Also responsible for bile acid transport in the renal proximal tubules, a salvage mechanism that helps conserve bile acids. Works collaboratively with the Na(+)-taurocholate cotransporting polypeptide (NTCP), the organic solute transporter (OST), and the bile salt export pump (BSEP), to ensure efficacious biological recycling of bile acids during enterohepatic circulation. The protein is Ileal sodium/bile acid cotransporter (SLC10A2) of Homo sapiens (Human).